An 851-amino-acid polypeptide reads, in one-letter code: MKNNDKLDSHTPMMQQYLRLKAQHPEILLFYRMGDFYELFYSDAKRASQLLDISLTKRGASAGEPIPMAGVPYHSIENYLAKLVQLGESAAICEQIGDPATSKGPVERKVVRIVTPGTISDEALLQERQDNLLAAIWQDAKGFGYATLDISSGRFRVAEPADLETMAAELQRTNPAELLYPENFEPMSLIEHRHGLRRRPLWEFELDTAKQQLNLQFGTRDLIGFGVEQAHLALRAAGCLLQYVKDTQRTSLPHIRGLTMERQQDGIIMDAATRRNLELTQNLSGGSENTLAAILDCSVTPMGSRMLKRWLHMPIRDIRVLTDRQQAIGGLQDIAAELQTPLRQVGDLERILARLALRTARPRDLARMRHAFQQLPEIHRLLQPIDVPHVQNLLSQVGQFDELQDLLERAIVETPPVLVRDGGVIASGYNAELDEWRALADGATDYLDRLEIREREKLGLDTLKVGFNGVHGYYIQVSRGQSHLVPIHYVRRQTLKNAERYIIPELKEYEDKVLTSKGKALAIEKGLYEEIFDLLLPHLPELQLSANALAELDVLANLAERAETLNYSCPTLSDKPGIKIMGGRHPVVEQVLKEPFISNPLTLSPQRRMLIITGPNMGGKSTYMRQTALIVLLAHLGSYVPADQATIGPIDRIFTRVGAADDLASGRSTFMVEMTETANILHNATEQSLVLMDEIGRGTSTYDGLSLAWACAENLASRIKAMTLFATHYFELTTLPEKMEGVVNVHLDALEHGETIAFMHSVQEGAASKSYGLAVAALAGVPRDVIKRARQKLKELESLSNNAAASTIDGSQMTLLNEEIPPAVEALEALDPDSLSPRQALEWIYRLKNMV.

Residue 614 to 621 (GPNMGGKS) participates in ATP binding.

This sequence belongs to the DNA mismatch repair MutS family.

This protein is involved in the repair of mismatches in DNA. It is possible that it carries out the mismatch recognition step. This protein has a weak ATPase activity. The sequence is that of DNA mismatch repair protein MutS from Yersinia pestis.